Consider the following 207-residue polypeptide: 3-demethoxyubiquinol 3-hydroxylase (207 aa).

6 residues coordinate Fe cation: glutamate 56, glutamate 86, histidine 89, glutamate 138, glutamate 170, and histidine 173.

Belongs to the COQ7 family. The cofactor is Fe cation.

It is found in the cell membrane. It catalyses the reaction a 5-methoxy-2-methyl-3-(all-trans-polyprenyl)benzene-1,4-diol + AH2 + O2 = a 3-demethylubiquinol + A + H2O. It participates in cofactor biosynthesis; ubiquinone biosynthesis. Catalyzes the hydroxylation of 2-nonaprenyl-3-methyl-6-methoxy-1,4-benzoquinol during ubiquinone biosynthesis. This is 3-demethoxyubiquinol 3-hydroxylase from Cupriavidus pinatubonensis (strain JMP 134 / LMG 1197) (Cupriavidus necator (strain JMP 134)).